Here is a 369-residue protein sequence, read N- to C-terminus: Queuine tRNA-ribosyltransferase (369 aa).

Asp-90 serves as the catalytic Proton acceptor. Residues 90-94, Asp-144, Gln-186, and Gly-213 contribute to the substrate site; that span reads DSGGF. The interval 244-250 is RNA binding; sequence GVGKPAD. Asp-263 functions as the Nucleophile in the catalytic mechanism. Cys-301, Cys-303, Cys-306, and His-332 together coordinate Zn(2+).

The protein belongs to the queuine tRNA-ribosyltransferase family. Homodimer. Within each dimer, one monomer is responsible for RNA recognition and catalysis, while the other monomer binds to the replacement base PreQ1. Zn(2+) is required as a cofactor.

The enzyme catalyses 7-aminomethyl-7-carbaguanine + guanosine(34) in tRNA = 7-aminomethyl-7-carbaguanosine(34) in tRNA + guanine. It functions in the pathway tRNA modification; tRNA-queuosine biosynthesis. In terms of biological role, catalyzes the base-exchange of a guanine (G) residue with the queuine precursor 7-aminomethyl-7-deazaguanine (PreQ1) at position 34 (anticodon wobble position) in tRNAs with GU(N) anticodons (tRNA-Asp, -Asn, -His and -Tyr). Catalysis occurs through a double-displacement mechanism. The nucleophile active site attacks the C1' of nucleotide 34 to detach the guanine base from the RNA, forming a covalent enzyme-RNA intermediate. The proton acceptor active site deprotonates the incoming PreQ1, allowing a nucleophilic attack on the C1' of the ribose to form the product. After dissociation, two additional enzymatic reactions on the tRNA convert PreQ1 to queuine (Q), resulting in the hypermodified nucleoside queuosine (7-(((4,5-cis-dihydroxy-2-cyclopenten-1-yl)amino)methyl)-7-deazaguanosine). This chain is Queuine tRNA-ribosyltransferase, found in Dichelobacter nodosus (strain VCS1703A).